Reading from the N-terminus, the 537-residue chain is Membrane protein insertase YidC (537 aa).

Transmembrane regions (helical) follow at residues 5–25, 353–373, 418–438, and 495–515; these read LIIA…IFPT, GNYG…FFPL, VNPL…FGLY, and MLML…GLVI.

It belongs to the OXA1/ALB3/YidC family. Type 1 subfamily. Interacts with the Sec translocase complex via SecD. Specifically interacts with transmembrane segments of nascent integral membrane proteins during membrane integration.

The protein localises to the cell inner membrane. Required for the insertion and/or proper folding and/or complex formation of integral membrane proteins into the membrane. Involved in integration of membrane proteins that insert both dependently and independently of the Sec translocase complex, as well as at least some lipoproteins. Aids folding of multispanning membrane proteins. This chain is Membrane protein insertase YidC, found in Citrifermentans bemidjiense (strain ATCC BAA-1014 / DSM 16622 / JCM 12645 / Bem) (Geobacter bemidjiensis).